The chain runs to 213 residues: Thymidylate kinase (213 aa).

11 to 18 is a binding site for ATP; the sequence is GGEGAGKT.

Belongs to the thymidylate kinase family.

The catalysed reaction is dTMP + ATP = dTDP + ADP. Functionally, phosphorylation of dTMP to form dTDP in both de novo and salvage pathways of dTTP synthesis. The polypeptide is Thymidylate kinase (Shouchella clausii (strain KSM-K16) (Alkalihalobacillus clausii)).